A 161-amino-acid chain; its full sequence is Putative ecotin-like protein (161 aa).

Positions 1–24 are cleaved as a signal peptide; the sequence is MSLRPIETAIASLTMLMLQGCAHA.

It belongs to the protease inhibitor I11 (ecotin) family.

This is Putative ecotin-like protein from Methylobacillus flagellatus (strain ATCC 51484 / DSM 6875 / VKM B-1610 / KT).